The following is a 532-amino-acid chain: L-proline--[L-prolyl-carrier protein] ligase (532 aa).

A disordered region spans residues 510–532; the sequence is KTDYRRLGLDAPPRPAAPLGTAR.

It belongs to the ATP-dependent AMP-binding enzyme family.

It carries out the reaction holo-[peptidyl-carrier protein] + L-proline + ATP = L-prolyl-[peptidyl-carrier protein] + AMP + diphosphate. In terms of biological role, involved in the biosynthesis of undecylprodigiosin. Catalyzes the conversion of L-proline to L-prolyl-AMP and the transfer of the L-prolyl group to acyl carrier protein RedO. This Streptomyces coelicolor (strain ATCC BAA-471 / A3(2) / M145) protein is L-proline--[L-prolyl-carrier protein] ligase.